We begin with the raw amino-acid sequence, 422 residues long: Tyrosine--tRNA ligase (422 aa).

An L-tyrosine-binding site is contributed by Tyr37. The short motif at 42–51 (PTEESLHIGH) is the 'HIGH' region element. Positions 175 and 179 each coordinate L-tyrosine. The 'KMSKS' region signature appears at 235–239 (KFGKT). Lys238 is a binding site for ATP. The 58-residue stretch at 357–414 (KDLQEALVLTSLAQSRTQAKNMIISNSISINTEKIRKNHIFHEKDKLFGKFTLLSRGK) folds into the S4 RNA-binding domain.

This sequence belongs to the class-I aminoacyl-tRNA synthetase family. TyrS type 1 subfamily. As to quaternary structure, homodimer.

It is found in the cytoplasm. The catalysed reaction is tRNA(Tyr) + L-tyrosine + ATP = L-tyrosyl-tRNA(Tyr) + AMP + diphosphate + H(+). Functionally, catalyzes the attachment of tyrosine to tRNA(Tyr) in a two-step reaction: tyrosine is first activated by ATP to form Tyr-AMP and then transferred to the acceptor end of tRNA(Tyr). The protein is Tyrosine--tRNA ligase of Buchnera aphidicola subsp. Acyrthosiphon pisum (strain APS) (Acyrthosiphon pisum symbiotic bacterium).